The primary structure comprises 333 residues: Ornithine carbamoyltransferase (333 aa).

Carbamoyl phosphate is bound by residues 56-59, Gln-83, Arg-107, and 134-137; these read STRT and HPTQ. L-ornithine is bound by residues Asn-167, Asp-231, and 235–236; that span reads SM. Carbamoyl phosphate contacts are provided by residues 273–274 and Arg-318; that span reads CL.

This sequence belongs to the aspartate/ornithine carbamoyltransferase superfamily. OTCase family.

Its subcellular location is the cytoplasm. It catalyses the reaction carbamoyl phosphate + L-ornithine = L-citrulline + phosphate + H(+). It functions in the pathway amino-acid biosynthesis; L-arginine biosynthesis; L-arginine from L-ornithine and carbamoyl phosphate: step 1/3. In terms of biological role, reversibly catalyzes the transfer of the carbamoyl group from carbamoyl phosphate (CP) to the N(epsilon) atom of ornithine (ORN) to produce L-citrulline. This is Ornithine carbamoyltransferase (argF) from Staphylococcus aureus (strain COL).